The following is a 329-amino-acid chain: MISFREENIDLNLIKTISVICNDPDATDSSSDDESISGNNPRRQIKPKPPKRYVSKICVPTLIKRYENVSNSTGNKAAGNRKTSSGFKGVRRRPWGKFAAEIRNPFEKKRKWLGTFPTEEEAAEAYQKSKREFDERLGLVKQEKDLVDLTKPCGVRKPEEKEVTEKSNCKKVNKRIVTDQKPFGCGYNADHEEEGVISKMLEDPLMTSSIADIFGDSAVEANDIWVDYNSVEFISIVDDFKFDFVENDRVGKEKTFGFKIGDHTKVNQHAKIVSTNGDLFVDDLLDFDPLIDDFKLEDFPMDDLGLLGDPEDDDFSWFNGTTDWIDKFL.

2 disordered regions span residues 25–51 (DATDSSSDDESISGNNPRRQIKPKPPK) and 71–90 (NSTGNKAAGNRKTSSGFKGV). Over residues 71-86 (NSTGNKAAGNRKTSSG) the composition is skewed to polar residues. The AP2/ERF DNA-binding region spans 86–143 (GFKGVRRRPWGKFAAEIRNPFEKKRKWLGTFPTEEEAAEAYQKSKREFDERLGLVKQE).

This sequence belongs to the AP2/ERF transcription factor family. ERF subfamily.

Its subcellular location is the nucleus. In terms of biological role, probably acts as a transcriptional activator. Binds to the GCC-box pathogenesis-related promoter element. May be involved in the regulation of gene expression by stress factors and by components of stress signal transduction pathways. This is Ethylene-responsive transcription factor ERF117 (ERF117) from Arabidopsis thaliana (Mouse-ear cress).